The primary structure comprises 391 residues: Immediate-early protein 2 (391 aa).

Belongs to the herpesviridae US22 family.

It localises to the host cytoplasm. Its subcellular location is the host nucleus. Functionally, involved in the reactivation of latent MCMV in spleen cells. This is Immediate-early protein 2 (IE2) from Murid herpesvirus 1 (strain Smith) (MuHV-1).